The sequence spans 101 residues: Large ribosomal subunit protein uL23 (101 aa).

The protein belongs to the universal ribosomal protein uL23 family. As to quaternary structure, part of the 50S ribosomal subunit. Contacts protein L29, and trigger factor when it is bound to the ribosome.

Its function is as follows. One of the early assembly proteins it binds 23S rRNA. One of the proteins that surrounds the polypeptide exit tunnel on the outside of the ribosome. Forms the main docking site for trigger factor binding to the ribosome. In Corynebacterium efficiens (strain DSM 44549 / YS-314 / AJ 12310 / JCM 11189 / NBRC 100395), this protein is Large ribosomal subunit protein uL23.